Reading from the N-terminus, the 199-residue chain is Transcription regulator complex subunit bur6 (199 aa).

Residues 106 to 199 are disordered; that stretch reads PPIKAERKTK…SEASSASGDE (94 aa). Residues 112–121 show a composition bias toward basic residues; that stretch reads RKTKRPRARR. The span at 185 to 199 shows a compositional bias: polar residues; that stretch reads SDKTTSEASSASGDE.

It belongs to the NC2 alpha/DRAP1 family.

Its subcellular location is the nucleus. Functionally, transcription regulator complex subunit that is essential for cell cycle progression. The protein is Transcription regulator complex subunit bur6 of Schizosaccharomyces pombe (strain 972 / ATCC 24843) (Fission yeast).